The following is a 289-amino-acid chain: Cuticle collagen 19 (289 aa).

The first 18 residues, 1–18 (MGKLIVVGSCGVLVCVLA), serve as a signal peptide directing secretion. The segment at 95–289 (SEGCPAGPPG…PCPSRAAYKA (195 aa)) is disordered. Triple-helical region regions lie at residues 101 to 130 (GPPGPPGEGGQKGNPGHDGDDGKPGAPGVI) and 147 to 269 (GRPG…KGED). Residues 162-183 (GPAGGNGRRGPPGPVGGPGEQG) show a composition bias toward gly residues. Composition is skewed to low complexity over residues 184–207 (PQGDAGRPGAAGRPGPAGPRGEPG) and 223–239 (PRGETGPAGNPGAPGND).

The protein belongs to the cuticular collagen family. As to quaternary structure, collagen polypeptide chains are complexed within the cuticle by disulfide bonds and other types of covalent cross-links.

In terms of biological role, nematode cuticles are composed largely of collagen-like proteins. The cuticle functions both as an exoskeleton and as a barrier to protect the worm from its environment. This Caenorhabditis elegans protein is Cuticle collagen 19 (col-19).